We begin with the raw amino-acid sequence, 286 residues long: Bifunctional protein FolD (286 aa).

NADP(+) contacts are provided by residues 165-167 and Ser-190; that span reads GRS.

It belongs to the tetrahydrofolate dehydrogenase/cyclohydrolase family. As to quaternary structure, homodimer.

It carries out the reaction (6R)-5,10-methylene-5,6,7,8-tetrahydrofolate + NADP(+) = (6R)-5,10-methenyltetrahydrofolate + NADPH. The enzyme catalyses (6R)-5,10-methenyltetrahydrofolate + H2O = (6R)-10-formyltetrahydrofolate + H(+). It functions in the pathway one-carbon metabolism; tetrahydrofolate interconversion. Functionally, catalyzes the oxidation of 5,10-methylenetetrahydrofolate to 5,10-methenyltetrahydrofolate and then the hydrolysis of 5,10-methenyltetrahydrofolate to 10-formyltetrahydrofolate. In Staphylococcus aureus (strain MRSA252), this protein is Bifunctional protein FolD.